Here is a 276-residue protein sequence, read N- to C-terminus: Diaminopimelate epimerase (276 aa).

3 residues coordinate substrate: Asn-13, Gln-46, and Asn-66. The active-site Proton donor is the Cys-75. Residues 76 to 77 (GN), Asn-159, Asn-192, and 210 to 211 (ER) contribute to the substrate site. The Proton acceptor role is filled by Cys-219. 220–221 (GS) serves as a coordination point for substrate.

Belongs to the diaminopimelate epimerase family. As to quaternary structure, homodimer.

It localises to the cytoplasm. It catalyses the reaction (2S,6S)-2,6-diaminopimelate = meso-2,6-diaminopimelate. It functions in the pathway amino-acid biosynthesis; L-lysine biosynthesis via DAP pathway; DL-2,6-diaminopimelate from LL-2,6-diaminopimelate: step 1/1. Catalyzes the stereoinversion of LL-2,6-diaminopimelate (L,L-DAP) to meso-diaminopimelate (meso-DAP), a precursor of L-lysine and an essential component of the bacterial peptidoglycan. The polypeptide is Diaminopimelate epimerase (Vibrio campbellii (strain ATCC BAA-1116)).